Reading from the N-terminus, the 398-residue chain is MTTTDPVANLAALIRCPSVTPAEGGALSLLDTLLSPLGFAVERVMATEDGTPDVENLYARLGTEGPHLMFAGHTDVVPVGDEAAWSHPPFSADIAGGEMYGRGAVDMKGGIACFVAAIARHIGKHGKPQGSVSFLITGDEEGPSINGTSKLLEWAAAKGETWDACVVGEPTNPDQLGDMIKIGRRGSLSGRITVQGVQGHAAYPHLADNPIRGLLQLTHALMHPAFDHGTDDFQPSNLEVTTVDTGNAATNVIPARATAAFNIRFNDSWTAESLRAEIIRRLDAAANEGELRPDRAPVKYEIVWADRPSHVFLTRNNALISSLSGAIETVTGKEPKLSTTGGTSDARFIKDYCPVVEFGLVGQTMHMVDERVAVADLETLTRIYETFIERWFAHADGK.

Residue H73 participates in Zn(2+) binding. D75 is an active-site residue. D106 serves as a coordination point for Zn(2+). The Proton acceptor role is filled by E140. The Zn(2+) site is built by E141, E169, and H366.

It belongs to the peptidase M20A family. DapE subfamily. In terms of assembly, homodimer. The cofactor is Zn(2+). Requires Co(2+) as cofactor.

The enzyme catalyses N-succinyl-(2S,6S)-2,6-diaminopimelate + H2O = (2S,6S)-2,6-diaminopimelate + succinate. It participates in amino-acid biosynthesis; L-lysine biosynthesis via DAP pathway; LL-2,6-diaminopimelate from (S)-tetrahydrodipicolinate (succinylase route): step 3/3. Catalyzes the hydrolysis of N-succinyl-L,L-diaminopimelic acid (SDAP), forming succinate and LL-2,6-diaminopimelate (DAP), an intermediate involved in the bacterial biosynthesis of lysine and meso-diaminopimelic acid, an essential component of bacterial cell walls. This Agrobacterium fabrum (strain C58 / ATCC 33970) (Agrobacterium tumefaciens (strain C58)) protein is Succinyl-diaminopimelate desuccinylase.